A 72-amino-acid polypeptide reads, in one-letter code: DNA-directed RNA polymerase subunit omega (72 aa).

Belongs to the RNA polymerase subunit omega family. In terms of assembly, the RNAP catalytic core consists of 2 alpha, 1 beta, 1 beta' and 1 omega subunit. When a sigma factor is associated with the core the holoenzyme is formed, which can initiate transcription.

It catalyses the reaction RNA(n) + a ribonucleoside 5'-triphosphate = RNA(n+1) + diphosphate. Functionally, promotes RNA polymerase assembly. Latches the N- and C-terminal regions of the beta' subunit thereby facilitating its interaction with the beta and alpha subunits. This is DNA-directed RNA polymerase subunit omega from Francisella tularensis subsp. tularensis (strain FSC 198).